The following is a 303-amino-acid chain: Glutaminase (303 aa).

Residues Ser-61, Asn-111, Glu-155, Asn-162, Tyr-186, Tyr-238, and Val-256 each contribute to the substrate site.

The protein belongs to the glutaminase family. In terms of assembly, homotetramer.

It catalyses the reaction L-glutamine + H2O = L-glutamate + NH4(+). The polypeptide is Glutaminase (Marinomonas sp. (strain MWYL1)).